The primary structure comprises 312 residues: Methionyl-tRNA formyltransferase (312 aa).

Residue 112–115 coordinates (6S)-5,6,7,8-tetrahydrofolate; that stretch reads SLLP.

Belongs to the Fmt family.

The enzyme catalyses L-methionyl-tRNA(fMet) + (6R)-10-formyltetrahydrofolate = N-formyl-L-methionyl-tRNA(fMet) + (6S)-5,6,7,8-tetrahydrofolate + H(+). Its function is as follows. Attaches a formyl group to the free amino group of methionyl-tRNA(fMet). The formyl group appears to play a dual role in the initiator identity of N-formylmethionyl-tRNA by promoting its recognition by IF2 and preventing the misappropriation of this tRNA by the elongation apparatus. This chain is Methionyl-tRNA formyltransferase, found in Syntrophus aciditrophicus (strain SB).